The primary structure comprises 313 residues: Olfactory receptor 1f45 (313 aa).

Residues 1–25 lie on the Extracellular side of the membrane; the sequence is MSSTNQSSVTEFLLLGLSRQPQQQQ. A glycan (N-linked (GlcNAc...) asparagine) is linked at Asn-5. Residues 26–50 form a helical membrane-spanning segment; it reads LLFLLFLIMYLATVLGNLLIILAIG. Topologically, residues 51–57 are cytoplasmic; the sequence is TDSRLHT. A helical transmembrane segment spans residues 58–79; sequence PMYFFLSNLSFVDVCFSSTTVP. Over 80–100 the chain is Extracellular; sequence KVLANHILGSQAISFSGCLTQ. Cys-97 and Cys-189 form a disulfide bridge. Residues 101 to 120 traverse the membrane as a helical segment; it reads LYFLAVFGNMDNFLLAVMSY. Over 121–139 the chain is Cytoplasmic; that stretch reads DRFVAICHPLHYTTKMTRQ. The chain crosses the membrane as a helical span at residues 140–158; the sequence is LCVLLVVGSWVVANMNCLL. Residues 159-196 are Extracellular-facing; it reads HILLMARLSFCADNMIPHFFCDGTPLLKLSCSDTHLNE. A helical transmembrane segment spans residues 197–219; it reads LMILTEGAVVMVTPFVCILISYI. The Cytoplasmic segment spans residues 220–236; that stretch reads HITCAVLRVSSPRGGWK. Residues 237–260 form a helical membrane-spanning segment; that stretch reads SFSTCGSHLAVVCLFYGTVIAVYF. The Extracellular portion of the chain corresponds to 261 to 272; that stretch reads NPSSSHLAGRDM. Residues 273 to 292 form a helical membrane-spanning segment; it reads AAAVMYAVVTPMLNPFIYSL. The Cytoplasmic portion of the chain corresponds to 293 to 313; sequence RNSDMKAALRKVLAMRFPSKQ.

Belongs to the G-protein coupled receptor 1 family. Olfactory epithelium.

It localises to the cell membrane. Functionally, odorant receptor. This is Olfactory receptor 1f45 (Or1f45) from Rattus norvegicus (Rat).